The chain runs to 482 residues: Glycogen synthase (482 aa).

Residue lysine 20 participates in ADP-alpha-D-glucose binding.

The protein belongs to the glycosyltransferase 1 family. Bacterial/plant glycogen synthase subfamily.

It carries out the reaction [(1-&gt;4)-alpha-D-glucosyl](n) + ADP-alpha-D-glucose = [(1-&gt;4)-alpha-D-glucosyl](n+1) + ADP + H(+). It participates in glycan biosynthesis; glycogen biosynthesis. Synthesizes alpha-1,4-glucan chains using ADP-glucose. This is Glycogen synthase from Aliivibrio salmonicida (strain LFI1238) (Vibrio salmonicida (strain LFI1238)).